The following is a 365-amino-acid chain: tRNA/tmRNA (uracil-C(5))-methyltransferase (365 aa).

5 residues coordinate S-adenosyl-L-methionine: glutamine 189, tyrosine 217, asparagine 222, glutamate 238, and aspartate 298. Cysteine 323 functions as the Nucleophile in the catalytic mechanism. Glutamate 357 serves as the catalytic Proton acceptor.

It belongs to the class I-like SAM-binding methyltransferase superfamily. RNA M5U methyltransferase family. TrmA subfamily.

It carries out the reaction uridine(54) in tRNA + S-adenosyl-L-methionine = 5-methyluridine(54) in tRNA + S-adenosyl-L-homocysteine + H(+). The enzyme catalyses uridine(341) in tmRNA + S-adenosyl-L-methionine = 5-methyluridine(341) in tmRNA + S-adenosyl-L-homocysteine + H(+). Dual-specificity methyltransferase that catalyzes the formation of 5-methyluridine at position 54 (m5U54) in all tRNAs, and that of position 341 (m5U341) in tmRNA (transfer-mRNA). The sequence is that of tRNA/tmRNA (uracil-C(5))-methyltransferase from Shewanella amazonensis (strain ATCC BAA-1098 / SB2B).